The following is a 154-amino-acid chain: Resuscitation-promoting factor RpfD (154 aa).

Residues 21–41 (IVCTVFIETAVVATMFVALLG) form a helical membrane-spanning segment.

Belongs to the transglycosylase family. Rpf subfamily.

The protein resides in the cell membrane. In terms of biological role, factor that stimulates resuscitation of dormant cells. Has peptidoglycan (PG) hydrolytic activity. PG fragments could either directly activate the resuscitation pathway of dormant bacteria or serve as a substrate for endogenous Rpf, resulting in low molecular weight products with resuscitation activity. The sequence is that of Resuscitation-promoting factor RpfD (rpfD) from Mycobacterium tuberculosis (strain CDC 1551 / Oshkosh).